Reading from the N-terminus, the 365-residue chain is 3-dehydroquinate synthase (365 aa).

NAD(+) contacts are provided by residues 69–74 (DGEKYK), 103–107 (GVIGD), 127–128 (TT), Lys-140, and Lys-149. Zn(2+) is bound by residues Glu-182, His-245, and His-262.

It belongs to the sugar phosphate cyclases superfamily. Dehydroquinate synthase family. It depends on Co(2+) as a cofactor. Zn(2+) is required as a cofactor. Requires NAD(+) as cofactor.

It is found in the cytoplasm. It carries out the reaction 7-phospho-2-dehydro-3-deoxy-D-arabino-heptonate = 3-dehydroquinate + phosphate. The protein operates within metabolic intermediate biosynthesis; chorismate biosynthesis; chorismate from D-erythrose 4-phosphate and phosphoenolpyruvate: step 2/7. In terms of biological role, catalyzes the conversion of 3-deoxy-D-arabino-heptulosonate 7-phosphate (DAHP) to dehydroquinate (DHQ). The sequence is that of 3-dehydroquinate synthase from Pseudomonas entomophila (strain L48).